The primary structure comprises 300 residues: Free fatty acid receptor 1 (300 aa).

Topologically, residues 1–8 are extracellular; the sequence is MDLPPQLS. Residues 9 to 31 traverse the membrane as a helical segment; that stretch reads FALYVSAFALGFPLNLLAIRGAV. Over 32-41 the chain is Cytoplasmic; that stretch reads SHAKLRLTPS. The helical transmembrane segment at 42-64 threads the bilayer; that stretch reads LVYTLHLACSDLLLAITLPLKAV. Residues 65 to 79 lie on the Extracellular side of the membrane; it reads EALASGVWPLPLPFC. Residues Cys79 and Cys170 are joined by a disulfide bond. Residues 80–101 form a helical membrane-spanning segment; sequence PVFALAHFAPLYAGGGFLAALS. Over 102-121 the chain is Cytoplasmic; that stretch reads AGRYLGAAFPFGYQAIRRPC. Residues 122 to 142 traverse the membrane as a helical segment; that stretch reads YSWGVCVAIWALVLCHLGLAL. At 143-178 the chain is on the extracellular side; it reads GLEAPRGWVDNTTSSLGINIPVNGSPVCLEAWDPDS. A glycan (N-linked (GlcNAc...) asparagine) is linked at Asn153. The chain crosses the membrane as a helical span at residues 179 to 200; sequence ARPARLSFSILLFFLPLVITAF. Topologically, residues 201-223 are cytoplasmic; it reads CYVGCLRALVHSGLSHKRKLRAA. The chain crosses the membrane as a helical span at residues 224–248; it reads WVAGGALLTLLLCLGPYNASNVASF. Topologically, residues 249–256 are extracellular; sequence INPDLEGS. Residues 257–279 form a helical membrane-spanning segment; sequence WRKLGLITGAWSVVLNPLVTGYL. At 280 to 300 the chain is on the cytoplasmic side; sequence GTGPGQGTICVTRTPRGTIQK.

This sequence belongs to the G-protein coupled receptor 1 family. As to expression, expressed abundantly in pancreatic beta cells.

The protein resides in the cell membrane. Its function is as follows. G-protein coupled receptor for medium and long chain saturated and unsaturated fatty acids that plays an important role in glucose homeostasis. Fatty acid binding increases glucose-stimulated insulin secretion, and may also enhance the secretion of glucagon-like peptide 1 (GLP-1). May also play a role in bone homeostasis; receptor signaling activates pathways that inhibit osteoclast differentiation. Ligand binding leads to a conformation change that triggers signaling via G-proteins that activate phospholipase C, leading to an increase of the intracellular calcium concentration. Seems to act through a G(q) and G(i)-mediated pathway. Mediates the anti-inflammatory effects of omega-3 polyunsaturated fatty acids (PUFAs) via inhibition of NLRP3 inflammasome activation. This is Free fatty acid receptor 1 (Ffar1) from Rattus norvegicus (Rat).